A 100-amino-acid polypeptide reads, in one-letter code: Urease subunit gamma (100 aa).

This sequence belongs to the urease gamma subunit family. As to quaternary structure, heterotrimer of UreA (gamma), UreB (beta) and UreC (alpha) subunits. Three heterotrimers associate to form the active enzyme.

The protein localises to the cytoplasm. It catalyses the reaction urea + 2 H2O + H(+) = hydrogencarbonate + 2 NH4(+). Its pathway is nitrogen metabolism; urea degradation; CO(2) and NH(3) from urea (urease route): step 1/1. In Trichormus variabilis (strain ATCC 29413 / PCC 7937) (Anabaena variabilis), this protein is Urease subunit gamma.